We begin with the raw amino-acid sequence, 655 residues long: p-hydroxybenzoic acid efflux pump subunit AaeB (655 aa).

The next 11 membrane-spanning stretches (helical) occupy residues 13-33, 38-58, 69-89, 93-113, 121-141, 152-172, 370-390, 407-427, 431-451, 459-479, and 482-502; these read FAVK…HFQL, WAVL…GGEP, LRII…IAMI, LLMI…SSLV, WGLA…EPLL, EIVI…PRSI, LFWL…IAVV, FIYG…VIIP, QSML…GIEV, MGAL…TFHF, and FLDS…VILL.

Belongs to the aromatic acid exporter ArAE (TC 2.A.85) family.

The protein resides in the cell inner membrane. Functionally, forms an efflux pump with AaeA. Could function as a metabolic relief valve, allowing to eliminate certain compounds when they accumulate to high levels in the cell. This Escherichia coli O81 (strain ED1a) protein is p-hydroxybenzoic acid efflux pump subunit AaeB.